A 383-amino-acid polypeptide reads, in one-letter code: Gamma-butyrobetaine dioxygenase (383 aa).

Positions 46, 48, 51, and 91 each coordinate Zn(2+). Positions 209, 211, and 350 each coordinate Fe cation.

The protein belongs to the gamma-BBH/TMLD family. Homodimer. Requires Fe(2+) as cofactor. It depends on L-ascorbate as a cofactor.

It is found in the cytoplasm. It catalyses the reaction 4-(trimethylamino)butanoate + 2-oxoglutarate + O2 = carnitine + succinate + CO2. The protein operates within amine and polyamine biosynthesis; carnitine biosynthesis. Functionally, catalyzes the formation of L-carnitine from gamma-butyrobetaine. This Pseudomonas sp. (strain AK-1) protein is Gamma-butyrobetaine dioxygenase.